The following is a 464-amino-acid chain: MAASCLVLLALCLLLPLLLLGGWKRWRRGRTARHVVAVVLGDVGRSPRMQYHALSLAMHGFSVTLLGFCNSKPHDELLQNNRIQIVGLTELQSLAVGPRVFQYGVKVVFQAMYLLWKLMWREPGAYIFLQNPPGLPSIAVCWFVGCLCGSKLVIDWHNYGYSIMGLVHGPNHPLVLLAKWYERFFGRLSHLNLCVTNAMREDLAENWHIRAVTVYDKPASFFKETPLDLQHRLFMKLGGTHSPFRARSEPEDPATERSAFTERDAGSGLVTRLHERPALLVSSTSWTEDEDFSILLAALEKFEQLTLDGHSLPSLVCVITGKGPLREYYSHLIHQKHFQHIQVCTPWLEAEDYPLLLGSADLGVCLHTSSSGLDLPMKVVDMFGCHLPVCAVNFKCLHELVKHEENGLVFEDSEELAAQLQMLFSNFPDPAGKLNQFRKNLRESQQLRWDESWVQTVLPLVMDT.

The Lumenal portion of the chain corresponds to methionine 1–alanine 2. A helical membrane pass occupies residues alanine 3 to tryptophan 23. The Cytoplasmic portion of the chain corresponds to lysine 24–arginine 99. The helical intramembrane region spans valine 100–tryptophan 120. At arginine 121–threonine 464 the chain is on the cytoplasmic side. Serine 242 is modified (phosphoserine). The segment at serine 242–threonine 261 is disordered.

This sequence belongs to the glycosyltransferase group 1 family. Glycosyltransferase 33 subfamily.

It localises to the endoplasmic reticulum membrane. It catalyses the reaction an N,N'-diacetylchitobiosyl-diphospho-di-trans,poly-cis-dolichol + GDP-alpha-D-mannose = a beta-D-Man-(1-&gt;4)-beta-D-GlcNAc-(1-&gt;4)-alpha-D-GlcNAc-diphospho-di-trans,poly-cis-dolichol + GDP + H(+). It participates in protein modification; protein glycosylation. In terms of biological role, mannosyltransferase that operates in the biosynthetic pathway of dolichol-linked oligosaccharides, the glycan precursors employed in protein asparagine (N)-glycosylation. The assembly of dolichol-linked oligosaccharides begins on the cytosolic side of the endoplasmic reticulum membrane and finishes in its lumen. The sequential addition of sugars to dolichol pyrophosphate produces dolichol-linked oligosaccharides containing fourteen sugars, including two GlcNAcs, nine mannoses and three glucoses. Once assembled, the oligosaccharide is transferred from the lipid to nascent proteins by oligosaccharyltransferases. Catalyzes, on the cytoplasmic face of the endoplasmic reticulum, the addition of the first mannose residues to the dolichol-linked oligosaccharide chain, to produce Man1GlcNAc(2)-PP-dolichol core oligosaccharide. Man1GlcNAc(2)-PP-dolichol is a substrate for ALG2, the following enzyme in the biosynthetic pathway. This Pongo abelii (Sumatran orangutan) protein is Chitobiosyldiphosphodolichol beta-mannosyltransferase.